Reading from the N-terminus, the 1459-residue chain is PPE family protein PPE34 (1459 aa).

It belongs to the mycobacterial PPE family. In terms of assembly, interacts with human TLR2.

It localises to the cell membrane. It is found in the secreted. The protein resides in the cell wall. The protein localises to the cell surface. In terms of biological role, facilitates a shift in the ensuing immunity toward the Th2 phenotype and could aid in immune evasion by mycobacteria. Interacts with human Toll-like receptor 2 (TLR2) and triggers functional maturation of human dendritic cells (DCs), leading to secretion of IL-4, IL-5 and IL-10 from CD4(+) T cells and induction of Th2 immune response. Maturation of DCs involves PI3K, ERK1/2, p38 MAPK and NF-kappa-B signaling pathways. The chain is PPE family protein PPE34 from Mycobacterium tuberculosis (strain ATCC 25618 / H37Rv).